Reading from the N-terminus, the 411-residue chain is Tyrosine--tRNA ligase (411 aa).

Y34 is a binding site for L-tyrosine. A 'HIGH' region motif is present at residues 39 to 48 (CTATSLHIGS). Residues Y171 and Q175 each coordinate L-tyrosine. A 'KMSKS' region motif is present at residues 231 to 235 (KMGKT). K234 contributes to the ATP binding site. The 67-residue stretch at 345–411 (ITAFELFHEA…GKKRHILVKI (67 aa)) folds into the S4 RNA-binding domain.

It belongs to the class-I aminoacyl-tRNA synthetase family. TyrS type 1 subfamily. Homodimer.

The protein resides in the cytoplasm. The enzyme catalyses tRNA(Tyr) + L-tyrosine + ATP = L-tyrosyl-tRNA(Tyr) + AMP + diphosphate + H(+). In terms of biological role, catalyzes the attachment of tyrosine to tRNA(Tyr) in a two-step reaction: tyrosine is first activated by ATP to form Tyr-AMP and then transferred to the acceptor end of tRNA(Tyr). The sequence is that of Tyrosine--tRNA ligase from Rickettsia bellii (strain RML369-C).